The sequence spans 396 residues: Tryptophan synthase beta chain (396 aa).

Residue K86 is modified to N6-(pyridoxal phosphate)lysine.

This sequence belongs to the TrpB family. In terms of assembly, tetramer of two alpha and two beta chains. Pyridoxal 5'-phosphate is required as a cofactor.

It catalyses the reaction (1S,2R)-1-C-(indol-3-yl)glycerol 3-phosphate + L-serine = D-glyceraldehyde 3-phosphate + L-tryptophan + H2O. The protein operates within amino-acid biosynthesis; L-tryptophan biosynthesis; L-tryptophan from chorismate: step 5/5. The beta subunit is responsible for the synthesis of L-tryptophan from indole and L-serine. The chain is Tryptophan synthase beta chain from Photobacterium profundum (strain SS9).